The chain runs to 578 residues: Arginine--tRNA ligase (578 aa).

The short motif at 127-137 is the 'HIGH' region element; the sequence is PNLAKEMHVGH.

The protein belongs to the class-I aminoacyl-tRNA synthetase family. As to quaternary structure, monomer.

It localises to the cytoplasm. It catalyses the reaction tRNA(Arg) + L-arginine + ATP = L-arginyl-tRNA(Arg) + AMP + diphosphate. In Pseudomonas fluorescens (strain Pf0-1), this protein is Arginine--tRNA ligase.